The following is a 626-amino-acid chain: 4-hydroxy-3-methylbut-2-en-1-yl diphosphate synthase (flavodoxin) (626 aa).

[4Fe-4S] cluster is bound by residues C521, C524, C555, and E562.

This sequence belongs to the IspG family. It depends on [4Fe-4S] cluster as a cofactor.

It carries out the reaction (2E)-4-hydroxy-3-methylbut-2-enyl diphosphate + oxidized [flavodoxin] + H2O + 2 H(+) = 2-C-methyl-D-erythritol 2,4-cyclic diphosphate + reduced [flavodoxin]. Its pathway is isoprenoid biosynthesis; isopentenyl diphosphate biosynthesis via DXP pathway; isopentenyl diphosphate from 1-deoxy-D-xylulose 5-phosphate: step 5/6. Functionally, converts 2C-methyl-D-erythritol 2,4-cyclodiphosphate (ME-2,4cPP) into 1-hydroxy-2-methyl-2-(E)-butenyl 4-diphosphate. The sequence is that of 4-hydroxy-3-methylbut-2-en-1-yl diphosphate synthase (flavodoxin) from Bacteroides fragilis (strain ATCC 25285 / DSM 2151 / CCUG 4856 / JCM 11019 / LMG 10263 / NCTC 9343 / Onslow / VPI 2553 / EN-2).